A 283-amino-acid chain; its full sequence is Polyamine aminopropyltransferase (283 aa).

The PABS domain maps to 2 to 237 (ELWYTEEHTD…GHWLFGFASK (236 aa)). Q31 contributes to the S-methyl-5'-thioadenosine binding site. 2 residues coordinate spermidine: H62 and D86. S-methyl-5'-thioadenosine is bound by residues E106 and 137-138 (DG). D155 (proton acceptor) is an active-site residue. 155 to 158 (DSTD) provides a ligand contact to spermidine. An S-methyl-5'-thioadenosine-binding site is contributed by P162.

It belongs to the spermidine/spermine synthase family. As to quaternary structure, homodimer or homotetramer.

Its subcellular location is the cytoplasm. The catalysed reaction is S-adenosyl 3-(methylsulfanyl)propylamine + putrescine = S-methyl-5'-thioadenosine + spermidine + H(+). The protein operates within amine and polyamine biosynthesis; spermidine biosynthesis; spermidine from putrescine: step 1/1. Functionally, catalyzes the irreversible transfer of a propylamine group from the amino donor S-adenosylmethioninamine (decarboxy-AdoMet) to putrescine (1,4-diaminobutane) to yield spermidine. This Clostridium perfringens (strain SM101 / Type A) protein is Polyamine aminopropyltransferase.